The sequence spans 300 residues: Probable amino-acid ABC transporter periplasmic-binding protein y4tE (300 aa).

Positions 1–27 are cleaved as a signal peptide; that stretch reads MTHLKISKTAPAVARFLPAGRIASVAA.

Belongs to the bacterial solute-binding protein 3 family.

The protein resides in the periplasm. In terms of biological role, probably part of the binding-protein-dependent transport system y4tEFGH for an amino acid. The chain is Probable amino-acid ABC transporter periplasmic-binding protein y4tE from Sinorhizobium fredii (strain NBRC 101917 / NGR234).